The primary structure comprises 321 residues: MVTIRSGSIVILVLLAVSFLALVANGEDKTIKVKKVRGNKVCTQGWECSWWSKYCCNQTISDYFQVYQFEQLFSKRNTPIAHAVGFWDYQSFITAAALFEPLGFGTTGGKLMGQKEMAAFLGHVASKTSCGYGVATGGPLAWGLCYNREMSPMQSYCDESWKFKYPCSPGAEYYGRGALPIYWNFNYGAAGEALKADLLNHPEYIEQNATLAFQAAIWRWMTPIKRAQPSAHDIFVGNWKPTKNDTLSKRGPTFGSTMNVLYGEYTCGQGSIDPMNNIISHYLYFLDLMGIGREDAGPNDELSCAEQKPFNPSTVPSSSSS.

The signal sequence occupies residues 1–26; that stretch reads MVTIRSGSIVILVLLAVSFLALVANG. Cys42 and Cys55 form a disulfide bridge. An N-linked (GlcNAc...) asparagine glycan is attached at Asn57. A disulfide bridge links Cys157 with Cys167. N-linked (GlcNAc...) asparagine glycosylation is found at Asn208 and Asn244. Cysteines 267 and 304 form a disulfide. The interval 297 to 321 is disordered; the sequence is GPNDELSCAEQKPFNPSTVPSSSSS. Over residues 310–321 the composition is skewed to polar residues; that stretch reads FNPSTVPSSSSS.

This sequence belongs to the glycosyl hydrolase 19 family. As to expression, mostly expressed in seedlings shoots and roots, stems, and flowers, and, to a lower extent, in flowers, mature leaves and roots.

Its subcellular location is the secreted. No chitinase activity. Essential for normal plant growth and development. Regulates cell expansion extent and differentiation at least in roots and hypocotyls. Prevents lignin accumulation in the pith. May modulate ethylene-mediated regulation during development. Probably required to establish thermotolerance acclimation. Plays a role for controlled anisotropic cell expansion in the regulation of waving during root gravitropism and thigmotropism. Involved in the root system architecture adaptation to multiple environmental conditions such as nitrate. Contributes to salt tolerance and possibly to drought by preventing the overaccumulation of sodium ions. The chain is Chitinase-like protein 1 (CTL1) from Arabidopsis thaliana (Mouse-ear cress).